The chain runs to 239 residues: UPF0641 membrane protein YHR140W (239 aa).

At 1–11 (MMSCLVPTRFT) the chain is on the cytoplasmic side. The helical transmembrane segment at 12–31 (LTLNTACLLTSTWGFVRATS) threads the bilayer. Residues 32–45 (VVLPPSLSKAGHKQ) lie on the Lumenal side of the membrane. Residues 46 to 66 (FLTIISIIATIINNAVNISNY) traverse the membrane as a helical segment. The Cytoplasmic portion of the chain corresponds to 67–99 (YIQRNNKMNLETKKKSDFISRHVTLPVSLVLES). The chain crosses the membrane as a helical span at residues 100–120 (IVATVYWPLRLFFVNLIMHGV). Over 121-125 (ESTAK) the chain is Lumenal. Residues 126–146 (TPFPMTVDMAIHLYPILYLLA) traverse the membrane as a helical segment. Residues 147–162 (DHYLSGSGTKFKLSNK) lie on the Cytoplasmic side of the membrane. A helical membrane pass occupies residues 163–183 (HAWLIVTSLAFSYFQYLAFLI). Over 184–204 (DAGQGQAYPYPFLDVNEPYKS) the chain is Lumenal. A helical transmembrane segment spans residues 205-225 (IIFVVVATITWAYYVFYQKFP). Topologically, residues 226–239 (PKYIKKSAKKGDKN) are cytoplasmic.

This sequence belongs to the UPF0641 family.

The protein localises to the endoplasmic reticulum membrane. This is UPF0641 membrane protein YHR140W from Saccharomyces cerevisiae (strain ATCC 204508 / S288c) (Baker's yeast).